The following is a 190-amino-acid chain: MSSPGGSQQVEWVFIPVIKDVTYEFKVDNNDNITELYVNGNKLGPASSLEMDFYFDVDVSNNQVRKFNNVFVLFGVIATKDSNKIKMQLTLNPCDFVRGFVFPSQDPSQLNNIFASNNKVSVSEKAFAILNRKKEGAVSSTINVYITQNTYTGNTKIEKIQQNTIIIEKNTGIVFKIPNDMLNIFRYSTT.

The protein belongs to the CRISPR system Cmr7 family. As to quaternary structure, homodimer.

Functionally, CRISPR (clustered regularly interspaced short palindromic repeat) is an adaptive immune system that provides protection against mobile genetic elements (viruses, transposable elements and conjugative plasmids). CRISPR clusters contain spacers, sequences complementary to antecedent mobile elements, and target invading nucleic acids. CRISPR clusters are transcribed and processed into CRISPR RNA (crRNA). This is Putative CRISPR system CMR subunit Cmr7 2 (cmr7b) from Saccharolobus solfataricus (strain ATCC 35092 / DSM 1617 / JCM 11322 / P2) (Sulfolobus solfataricus).